Reading from the N-terminus, the 232-residue chain is Large ribosomal subunit protein uL1 (232 aa).

Belongs to the universal ribosomal protein uL1 family. As to quaternary structure, part of the 50S ribosomal subunit.

In terms of biological role, binds directly to 23S rRNA. The L1 stalk is quite mobile in the ribosome, and is involved in E site tRNA release. Its function is as follows. Protein L1 is also a translational repressor protein, it controls the translation of the L11 operon by binding to its mRNA. In Chlamydia trachomatis serovar L2 (strain ATCC VR-902B / DSM 19102 / 434/Bu), this protein is Large ribosomal subunit protein uL1.